The chain runs to 191 residues: UPF0149 protein VV2847 (191 aa).

It belongs to the UPF0149 family.

The sequence is that of UPF0149 protein VV2847 from Vibrio vulnificus (strain YJ016).